Here is a 687-residue protein sequence, read N- to C-terminus: Protein FAR1-RELATED SEQUENCE 1 (687 aa).

Residues 35–137 enclose the FAR1 domain; that stretch reads EFYKEYANSV…VKEHNHEIFT (103 aa). The region spanning 211 to 254 is the MULE domain; the sequence is KAMHGCRPRVILTKHDQMLKEAVLEVFPSSRHCFYMWDTLGQMP. The SWIM-type zinc finger occupies 440-476; sequence FVVVWNSESSEVVCSCRLFELKGFLCRHAMIVLQMSG. A coiled-coil region spans residues 540-562; it reads NVLNEALRKWENKSNLIQNLEES.

Belongs to the FHY3/FAR1 family. In terms of tissue distribution, expressed in rosette and cauline leaves, inflorescences stems, flowers and siliques.

It localises to the nucleus. In terms of biological role, putative transcription activator involved in regulating light control of development. The chain is Protein FAR1-RELATED SEQUENCE 1 (FRS1) from Arabidopsis thaliana (Mouse-ear cress).